The sequence spans 249 residues: Transcription factor MYB90 (249 aa).

2 consecutive HTH myb-type domains span residues serine 5–leucine 57 and lysine 58–histidine 112. 2 consecutive DNA-binding regions (H-T-H motif) follow at residues tryptophan 33 to leucine 57 and tryptophan 85 to leucine 108.

In terms of assembly, interacts with BHLH12/MYC1, BHLH1/GL3/MYC6, BHLH2/EGL3/MYC146, and BHLH42/TT8. As to expression, expressed only in leaves and siliques.

The protein resides in the nucleus. Its function is as follows. Transcription activator, when associated with BHLH12/MYC1, EGL3, or GL3. Promotes the synthesis of phenylpropanoid-derived compounds such as anthocyanins. The protein is Transcription factor MYB90 (MYB90) of Arabidopsis thaliana (Mouse-ear cress).